Consider the following 300-residue polypeptide: Urease accessory protein UreD (300 aa).

It belongs to the UreD family. As to quaternary structure, ureD, UreF and UreG form a complex that acts as a GTP-hydrolysis-dependent molecular chaperone, activating the urease apoprotein by helping to assemble the nickel containing metallocenter of UreC. The UreE protein probably delivers the nickel.

The protein resides in the cytoplasm. Functionally, required for maturation of urease via the functional incorporation of the urease nickel metallocenter. This chain is Urease accessory protein UreD, found in Prochlorococcus marinus (strain MIT 9312).